A 282-amino-acid polypeptide reads, in one-letter code: Interferon-inducible double-stranded RNA-dependent protein kinase activator A homolog (282 aa).

3 DRBM domains span residues 10–77, 99–167, and 209–277; these read TPIQ…LLKR, NPVG…KLQS, and DYIQ…YIKM.

This sequence belongs to the PRKRA family. Homodimer. Interacts with dicer1 and eif2ak2/pkr. Also able to interact with dsRNA.

It is found in the cytoplasm. The protein localises to the perinuclear region. In terms of biological role, activates eif2ak2/pkr in the absence of double-stranded RNA (dsRNA), leading to phosphorylation of eif2s1/efi2-alpha and inhibition of translation and induction of apoptosis. Required for siRNA production by dicer1 and for subsequent siRNA-mediated post-transcriptional gene silencing. Does not seem to be required for processing of pre-miRNA to miRNA by dicer1. This chain is Interferon-inducible double-stranded RNA-dependent protein kinase activator A homolog (prkra), found in Danio rerio (Zebrafish).